The primary structure comprises 513 residues: ATP synthase subunit alpha (513 aa).

169-176 is a binding site for ATP; the sequence is GDRQTGKT.

The protein belongs to the ATPase alpha/beta chains family. F-type ATPases have 2 components, CF(1) - the catalytic core - and CF(0) - the membrane proton channel. CF(1) has five subunits: alpha(3), beta(3), gamma(1), delta(1), epsilon(1). CF(0) has three main subunits: a(1), b(2) and c(9-12). The alpha and beta chains form an alternating ring which encloses part of the gamma chain. CF(1) is attached to CF(0) by a central stalk formed by the gamma and epsilon chains, while a peripheral stalk is formed by the delta and b chains.

The protein resides in the cell inner membrane. It carries out the reaction ATP + H2O + 4 H(+)(in) = ADP + phosphate + 5 H(+)(out). In terms of biological role, produces ATP from ADP in the presence of a proton gradient across the membrane. The alpha chain is a regulatory subunit. This chain is ATP synthase subunit alpha, found in Bordetella avium (strain 197N).